Reading from the N-terminus, the 295-residue chain is Large ribosomal subunit protein uL18 (295 aa).

The span at 251–261 (PTPKKKTDFAG) shows a compositional bias: basic and acidic residues. The interval 251 to 295 (PTPKKKTDFAGKTKRWNRKKMTFSQRRDRVKQKKASFLRAKQQEG) is disordered. Basic residues predominate over residues 262-271 (KTKRWNRKKM).

It belongs to the universal ribosomal protein uL18 family. Component of the large ribosomal subunit (LSU).

It localises to the cytoplasm. The protein localises to the nucleus. Component of the ribosome, a large ribonucleoprotein complex responsible for the synthesis of proteins in the cell. The small ribosomal subunit (SSU) binds messenger RNAs (mRNAs) and translates the encoded message by selecting cognate aminoacyl-transfer RNA (tRNA) molecules. The large subunit (LSU) contains the ribosomal catalytic site termed the peptidyl transferase center (PTC), which catalyzes the formation of peptide bonds, thereby polymerizing the amino acids delivered by tRNAs into a polypeptide chain. The nascent polypeptides leave the ribosome through a tunnel in the LSU and interact with protein factors that function in enzymatic processing, targeting, and the membrane insertion of nascent chains at the exit of the ribosomal tunnel. In Styela clava (Sea squirt), this protein is Large ribosomal subunit protein uL18 (RPL5).